Reading from the N-terminus, the 514-residue chain is Na(+)/H(+) antiporter NhaB (514 aa).

11 helical membrane passes run 21–41, 43–63, 88–108, 143–163, 203–223, 239–259, 304–324, 349–369, 390–410, 448–468, and 484–504; these read LAIV…SPFI, GWLL…CYPL, IMAN…IFFM, FLDA…FYGV, LMMH…VGEP, FFLR…LTCF, ALIA…VGLI, QESL…AVII, LALF…VFVA, ATPN…SPLI, and IVLS…ATIW.

This sequence belongs to the NhaB Na(+)/H(+) (TC 2.A.34) antiporter family.

It localises to the cell inner membrane. It catalyses the reaction 2 Na(+)(in) + 3 H(+)(out) = 2 Na(+)(out) + 3 H(+)(in). Functionally, na(+)/H(+) antiporter that extrudes sodium in exchange for external protons. The protein is Na(+)/H(+) antiporter NhaB of Haemophilus influenzae (strain 86-028NP).